We begin with the raw amino-acid sequence, 328 residues long: GATA transcription factor 17 (328 aa).

The tract at residues 1–68 is disordered; it reads MSGHHEAKPY…EEYEGGEGVP (68 aa). A compositionally biased stretch (low complexity) spans 14–29; the sequence is RGPAPADEEAAPAAAA. Composition is skewed to acidic residues over residues 30 to 39 and 47 to 63; these read DEAEAEAEVE and EQEY…EYEG. In terms of domain architecture, Tify spans 100-135; the sequence is PHVASNTLTLSFQGEVYVFESVSAERVQAVLLLLGG. Positions 161–203 constitute a CCT domain; it reads RMASLMRFREKRKERNFDKKIRYTVRKEVALRMQRNRGQFTSS. The tract at residues 198-231 is disordered; that stretch reads GQFTSSKSKAEEATSVITSSEGSPNWGAVEGRPP. The segment at 236 to 263 adopts a GATA-type zinc-finger fold; sequence CHHCGISAASTPMMRRGPDGPRTLCNAC.

It belongs to the type IV zinc-finger family. Class C subfamily.

It is found in the nucleus. Its function is as follows. Transcriptional activator that specifically binds 5'-GATA-3' or 5'-GAT-3' motifs within gene promoters. This Oryza sativa subsp. japonica (Rice) protein is GATA transcription factor 17.